A 229-amino-acid polypeptide reads, in one-letter code: Potassium/proton antiporter CemA (229 aa).

Helical transmembrane passes span 7–27, 107–127, and 189–209; these read FTPL…SLLF, ILHF…SIFG, and IISG…KYWI.

The protein belongs to the CemA family.

The protein localises to the plastid. Its subcellular location is the chloroplast inner membrane. It carries out the reaction K(+)(in) + H(+)(out) = K(+)(out) + H(+)(in). Contributes to K(+)/H(+) antiport activity by supporting proton efflux to control proton extrusion and homeostasis in chloroplasts in a light-dependent manner to modulate photosynthesis. Prevents excessive induction of non-photochemical quenching (NPQ) under continuous-light conditions. Indirectly promotes efficient inorganic carbon uptake into chloroplasts. In Guizotia abyssinica (Niger), this protein is Potassium/proton antiporter CemA.